A 231-amino-acid chain; its full sequence is Sugar fermentation stimulation protein homolog (231 aa).

Belongs to the SfsA family.

The chain is Sugar fermentation stimulation protein homolog from Syntrophotalea carbinolica (strain DSM 2380 / NBRC 103641 / GraBd1) (Pelobacter carbinolicus).